The following is a 488-amino-acid chain: Cobyric acid synthase (488 aa).

Residues 254–442 (KFKIVVPVLP…VHGLFGMDTQ (189 aa)) form the GATase cobBQ-type domain. Catalysis depends on Cys336, which acts as the Nucleophile. The active site involves His434.

This sequence belongs to the CobB/CobQ family. CobQ subfamily.

It participates in cofactor biosynthesis; adenosylcobalamin biosynthesis. Catalyzes amidations at positions B, D, E, and G on adenosylcobyrinic A,C-diamide. NH(2) groups are provided by glutamine, and one molecule of ATP is hydrogenolyzed for each amidation. This is Cobyric acid synthase from Beijerinckia indica subsp. indica (strain ATCC 9039 / DSM 1715 / NCIMB 8712).